The primary structure comprises 269 residues: Phosphonates import ATP-binding protein PhnC (269 aa).

Positions Leu2–Ala245 constitute an ABC transporter domain. Gly34–Ser41 provides a ligand contact to ATP.

This sequence belongs to the ABC transporter superfamily. Phosphonates importer (TC 3.A.1.9.1) family. The complex is composed of two ATP-binding proteins (PhnC), two transmembrane proteins (PhnE) and a solute-binding protein (PhnD).

The protein localises to the cell inner membrane. It catalyses the reaction phosphonate(out) + ATP + H2O = phosphonate(in) + ADP + phosphate + H(+). Its function is as follows. Part of the ABC transporter complex PhnCDE involved in phosphonates import. Responsible for energy coupling to the transport system. In Bradyrhizobium diazoefficiens (strain JCM 10833 / BCRC 13528 / IAM 13628 / NBRC 14792 / USDA 110), this protein is Phosphonates import ATP-binding protein PhnC.